A 322-amino-acid chain; its full sequence is Arginase-1 (322 aa).

Positions 1–12 are enriched in low complexity; the sequence is MSSKSKSIGIIG. A disordered region spans residues 1–26; sequence MSSKSKSIGIIGAPFSKGQPRGGVEE. S7 carries the post-translational modification Phosphoserine. K17 bears the N6-succinyllysine mark. S62 is subject to Phosphoserine. Mn(2+)-binding residues include H101, D124, H126, and D128. Residues 126 to 130 and 137 to 139 contribute to the substrate site; these read HTDIN and SGN. A Phosphoserine modification is found at S163. Position 183 (D183) interacts with substrate. Residues D232 and D234 each coordinate Mn(2+). The substrate site is built by T246 and E277.

The protein belongs to the arginase family. As to quaternary structure, homotrimer. Interacts with CMTM6. It depends on Mn(2+) as a cofactor.

Its subcellular location is the cytoplasm. It carries out the reaction L-arginine + H2O = urea + L-ornithine. It functions in the pathway nitrogen metabolism; urea cycle; L-ornithine and urea from L-arginine: step 1/1. The protein is Arginase-1 (ARG1) of Oryctolagus cuniculus (Rabbit).